Consider the following 240-residue polypeptide: Transcriptional regulatory protein rxt2 (240 aa).

The protein belongs to the RXT2 family. In terms of assembly, component of the RPD3C(L) complex.

It localises to the nucleus. In terms of biological role, component of the RPD3C(L) histone deacetylase complex (HDAC) responsible for the deacetylation of lysine residues on the N-terminal part of the core histones (H2A, H2B, H3 and H4). Histone deacetylation gives a tag for epigenetic repression and plays an important role in transcriptional regulation, cell cycle progression and developmental events. In Schizosaccharomyces pombe (strain 972 / ATCC 24843) (Fission yeast), this protein is Transcriptional regulatory protein rxt2 (rtx2).